We begin with the raw amino-acid sequence, 417 residues long: Probable serine incorporator (417 aa).

The next 10 helical transmembrane spans lie at 25–45, 69–89, 104–124, 131–151, 180–200, 208–228, 239–259, 276–296, 339–359, and 391–411; these read VYVV…YWTF, VVYR…LVMI, GYWP…FFIP, YTWI…VLLI, CVLS…MLVF, INQF…VLSI, SGLF…YSAI, KEST…YSAF, FFHF…TNWA, and VVSS…PILL.

Belongs to the TDE1 family.

Its subcellular location is the endoplasmic reticulum membrane. In terms of biological role, enhances the incorporation of serine into phosphatidylserine and sphingolipids. The chain is Probable serine incorporator (serinc) from Dictyostelium discoideum (Social amoeba).